The following is a 471-amino-acid chain: MAAFTLWILVLNVFLLGFQARKLASNLKFPIQKCDDSTPQKNFNSFLWLVKRTPPAYFYGTIHVPYTRVWDFIPMNSKQAFTASQHVYFELDLTDEKTMRALMKCQMLPSGTMLRQTLPRKMFKRLKSHLRYIKRMIPKWIKHRDQETSSAGPYANKLYEMLTKDWDKKRPIWVMLMVNSLTESDIKTRGIPVLDQYLALEASRNHKLIGAVENVDEQCKPLNALNASQVVFALNQSLHFQERLRRGQVQVTYTTDDLIDHYNCGDLKSVLFSTQTSLPTLTVNSSLEQRERKRAQEIDQYFRNELIFQRNKRMAQRVITLLNNHPEKDFFFAFGAGHFLGNHSIIDIMKKHGYDVEYVKPEQELPSFKAKKSLNTRRERRKGCRGRRKKSKRCQKKKKRKRPDYSRVRLLQVATRRWNPTRKPYPTKLSEAPGARDISSRKAAASCTPIWTVSLALTCAVTCLLTYSGFR.

Residues 1–24 (MAAFTLWILVLNVFLLGFQARKLA) form the signal peptide. Topologically, residues 25–449 (SNLKFPIQKC…SRKAAASCTP (425 aa)) are extracellular. 4 N-linked (GlcNAc...) asparagine glycosylation sites follow: asparagine 226, asparagine 235, asparagine 284, and asparagine 342. A compositionally biased stretch (basic residues) spans 369-402 (KAKKSLNTRRERRKGCRGRRKKSKRCQKKKKRKR). Residues 369-406 (KAKKSLNTRRERRKGCRGRRKKSKRCQKKKKRKRPDYS) are disordered. The chain crosses the membrane as a helical span at residues 450-470 (IWTVSLALTCAVTCLLTYSGF). Position 471 (arginine 471) is a topological domain, cytoplasmic.

Belongs to the TIKI family. Mn(2+) is required as a cofactor. It depends on Co(2+) as a cofactor.

It is found in the membrane. Metalloprotease. The sequence is that of Metalloprotease TIKI homolog from Nematostella vectensis (Starlet sea anemone).